The following is a 212-amino-acid chain: ER lumen protein-retaining receptor 2 (212 aa).

Topologically, residues 1–4 are lumenal; that stretch reads MNIF. A helical membrane pass occupies residues 5–24; that stretch reads RLTGDLSHLAAIVILLLKIW. The Cytoplasmic portion of the chain corresponds to 25–32; it reads KTRSCAGI. The helical transmembrane segment at 33–52 threads the bilayer; sequence SGKSQLLFALVFTTRYLDLF. The segment at 47-48 is interaction with the K-D-E-L motif on target proteins; that stretch reads RY. The Lumenal portion of the chain corresponds to 53–58; the sequence is TSFISL. A helical membrane pass occupies residues 59-79; that stretch reads YNTSMKLIYIACSYATVYLIY. The Cytoplasmic portion of the chain corresponds to 80–92; the sequence is MKFKATYDGNHDT. The helical transmembrane segment at 93 to 110 threads the bilayer; it reads FRVEFLVVPVGGLSFLVN. Over 111 to 116 the chain is Lumenal; it reads HDFSPL. A helical membrane pass occupies residues 117–135; it reads EILWTFSIYLESVAILPQL. The Cytoplasmic portion of the chain corresponds to 136–149; it reads FMISKTGEAETITT. The helical transmembrane segment at 150 to 168 threads the bilayer; sequence HYLFFLGLYRALYLVNWIW. The segment at 159–169 is interaction with the K-D-E-L motif on target proteins; the sequence is RALYLVNWIWR. Residues 169-178 are Lumenal-facing; it reads RFYFEGFFDL. The chain crosses the membrane as a helical span at residues 179-199; sequence IAVVAGVVQTILYCDFFYLYI. Residues 200–212 lie on the Cytoplasmic side of the membrane; it reads TKVLKGKKLSLPA. The interval 204–207 is important for recycling of cargo proteins with the sequence motif K-D-E-L from the Golgi to the endoplasmic reticulum; that stretch reads KGKK.

It belongs to the ERD2 family.

The protein localises to the endoplasmic reticulum membrane. It is found in the golgi apparatus membrane. The protein resides in the cytoplasmic vesicle. Its subcellular location is the COPI-coated vesicle membrane. Its function is as follows. Membrane receptor that binds the K-D-E-L sequence motif in the C-terminal part of endoplasmic reticulum resident proteins and maintains their localization in that compartment by participating to their vesicle-mediated recycling back from the Golgi. Binding is pH dependent, and is optimal at pH 5-5.4. This chain is ER lumen protein-retaining receptor 2 (Kdelr2), found in Mus musculus (Mouse).